The sequence spans 101 residues: Small ribosomal subunit protein uS14 (101 aa).

Belongs to the universal ribosomal protein uS14 family. As to quaternary structure, part of the 30S ribosomal subunit. Contacts proteins S3 and S10.

Its function is as follows. Binds 16S rRNA, required for the assembly of 30S particles and may also be responsible for determining the conformation of the 16S rRNA at the A site. In Salmonella paratyphi A (strain ATCC 9150 / SARB42), this protein is Small ribosomal subunit protein uS14.